Consider the following 117-residue polypeptide: Holo-[acyl-carrier-protein] synthase (117 aa).

Mg(2+) contacts are provided by Asp8 and Glu55.

The protein belongs to the P-Pant transferase superfamily. AcpS family. It depends on Mg(2+) as a cofactor.

It is found in the cytoplasm. The enzyme catalyses apo-[ACP] + CoA = holo-[ACP] + adenosine 3',5'-bisphosphate + H(+). Its function is as follows. Transfers the 4'-phosphopantetheine moiety from coenzyme A to a Ser of acyl-carrier-protein. The protein is Holo-[acyl-carrier-protein] synthase of Finegoldia magna (strain ATCC 29328 / DSM 20472 / WAL 2508) (Peptostreptococcus magnus).